Here is a 402-residue protein sequence, read N- to C-terminus: Oxysterol-binding protein 8 (402 aa).

Positions 328 to 361 (DRIALEEGNLDVAAKEKHNLEEKQREDKRQRVAE) form a coiled coil.

It belongs to the OSBP family.

The chain is Oxysterol-binding protein 8 (osbH) from Dictyostelium discoideum (Social amoeba).